The primary structure comprises 273 residues: Shikimate dehydrogenase (NADP(+)) (273 aa).

Shikimate-binding positions include 15–17 (SLS) and T62. K66 functions as the Proton acceptor in the catalytic mechanism. Residue E78 coordinates NADP(+). The shikimate site is built by N87 and D102. Residues 126 to 130 (GAGGA), 150 to 155 (NRTIEK), and I217 contribute to the NADP(+) site. Y219 serves as a coordination point for shikimate. G240 contributes to the NADP(+) binding site.

This sequence belongs to the shikimate dehydrogenase family. Homodimer.

The enzyme catalyses shikimate + NADP(+) = 3-dehydroshikimate + NADPH + H(+). It participates in metabolic intermediate biosynthesis; chorismate biosynthesis; chorismate from D-erythrose 4-phosphate and phosphoenolpyruvate: step 4/7. In terms of biological role, involved in the biosynthesis of the chorismate, which leads to the biosynthesis of aromatic amino acids. Catalyzes the reversible NADPH linked reduction of 3-dehydroshikimate (DHSA) to yield shikimate (SA). The chain is Shikimate dehydrogenase (NADP(+)) from Nitrosopumilus maritimus (strain SCM1).